Reading from the N-terminus, the 129-residue chain is Fluoride-specific ion channel FluC (129 aa).

4 helical membrane passes run 4–24 (LFVAAGGALGSTLRYWLSGLI), 32–52 (FPWGTLVINISGSIVIGAFAT), 69–89 (FFMVGVCGGYTTFSSFSLQTL), and 105–125 (VLSVVFCLIGVWLGHVGAVLI). Residues Gly-76 and Thr-79 each contribute to the Na(+) site.

The protein belongs to the fluoride channel Fluc/FEX (TC 1.A.43) family.

The protein localises to the cell inner membrane. It carries out the reaction fluoride(in) = fluoride(out). With respect to regulation, na(+) is not transported, but it plays an essential structural role and its presence is essential for fluoride channel function. In terms of biological role, fluoride-specific ion channel. Important for reducing fluoride concentration in the cell, thus reducing its toxicity. This chain is Fluoride-specific ion channel FluC, found in Rhodospirillum rubrum (strain ATCC 11170 / ATH 1.1.1 / DSM 467 / LMG 4362 / NCIMB 8255 / S1).